Consider the following 227-residue polypeptide: 2,3-bisphosphoglycerate-dependent phosphoglycerate mutase (227 aa).

Residues 7–14, 20–21, R59, 86–89, K97, 113–114, and 182–183 each bind substrate; these read RHGFSEWN, TG, ERHY, RR, and GN. The active-site Tele-phosphohistidine intermediate is H8. E86 serves as the catalytic Proton donor/acceptor.

The protein belongs to the phosphoglycerate mutase family. BPG-dependent PGAM subfamily. Homodimer.

It catalyses the reaction (2R)-2-phosphoglycerate = (2R)-3-phosphoglycerate. It participates in carbohydrate degradation; glycolysis; pyruvate from D-glyceraldehyde 3-phosphate: step 3/5. Catalyzes the interconversion of 2-phosphoglycerate and 3-phosphoglycerate. This Haemophilus influenzae (strain 86-028NP) protein is 2,3-bisphosphoglycerate-dependent phosphoglycerate mutase.